A 1681-amino-acid polypeptide reads, in one-letter code: Probable clathrin heavy chain 1 (1681 aa).

7 WD40-like repeat regions span residues 22–65 (NITF…RPIS), 66–105 (ADSV…NVED), 106–147 (VVYW…QSLA), 148–193 (GTQI…QPIE), 194–255 (GHAA…ADTA), 256–299 (GDFP…ISTD), and 300–328 (TVFV…VSID). CHCR repeat units lie at residues 539-685 (SENG…QVVV), 688-830 (ASKY…SEDA), 835-974 (IINT…QLID), 981-1126 (LSET…VKEA), 1130-1271 (FIKA…FRLA), 1276-1422 (LHIV…LLLN), and 1425-1568 (LTVL…YDCF). Over residues 1616 to 1628 (ERSEHERKEEKAE) the composition is skewed to basic and acidic residues. Residues 1616 to 1635 (ERSEHERKEEKAEQQQNNGM) are disordered.

It belongs to the clathrin heavy chain family. Clathrin triskelions, composed of 3 heavy chains and 3 light chains, are the basic subunits of the clathrin coat. May interact with beta arrestin arr-1.

It is found in the cytoplasmic vesicle membrane. The protein localises to the membrane. It localises to the coated pit. Clathrin is the major protein of the polyhedral coat of coated pits and vesicles. May play a role in yolk protein clatherin-mediated endocytosis by oocytes during oogenesis. This chain is Probable clathrin heavy chain 1 (chc-1), found in Caenorhabditis elegans.